The chain runs to 160 residues: Large ribosomal subunit protein uL15 (160 aa).

Basic and acidic residues predominate over residues Met-1–Gly-11. The tract at residues Met-1–Lys-39 is disordered. Over residues Arg-21–Val-35 the composition is skewed to gly residues.

The protein belongs to the universal ribosomal protein uL15 family. Part of the 50S ribosomal subunit.

Functionally, binds to the 23S rRNA. This chain is Large ribosomal subunit protein uL15, found in Granulibacter bethesdensis (strain ATCC BAA-1260 / CGDNIH1).